Reading from the N-terminus, the 984-residue chain is Calsyntenin-1 (984 aa).

A signal peptide spans 1 to 18 (MRTAYFIFVGALLGVSYA). The Extracellular segment spans residues 19–850 (KHHHAARAPI…VGQGAIAGGA (832 aa)). 2 Cadherin domains span residues 66 to 142 (YLLT…APEI) and 143 to 257 (ENPW…APGV). 2 N-linked (GlcNAc...) asparagine glycosylation sites follow: Asn-206 and Asn-305. A helical membrane pass occupies residues 851 to 871 (VAVVVVVCVGFLLVLLVIGVL). Over 872–984 (KMRDTPMPRR…ISTNARSYRV (113 aa)) the chain is Cytoplasmic. Residues 878-959 (MPRRRRQKRQ…QTEVLPHLDA (82 aa)) form a disordered region. The segment covering 886 to 896 (RQSDGGMHWDD) has biased composition (basic and acidic residues). The span at 918-951 (EFSDEEEEEETDGESECSYRDEEDDVSEDEEDQT) shows a compositional bias: acidic residues.

The protein belongs to the calsyntenin family. In terms of assembly, interacts with isoform c of daf-2 (daf-2c); promoting daf-2c localization to synaptic regions. Interacts with klc-2. Interacts with unc-104. Post-translationally, a proportion of the protein is proteolytically cleaved before the transmembrane domain in neurons, leading to release in the extracellular space. In terms of tissue distribution, widely expressed in the nervous system. Highly expressed in many head neurons, including most amphid sensory neurons. Also expressed in other tissues, such as intestine and gonadal sheath cells.

It is found in the golgi apparatus membrane. Its subcellular location is the perikaryon. The protein localises to the cell projection. It localises to the axon. The protein resides in the secreted. It is found in the synaptic cleft. Its function is as follows. Cell adhesion molecule involved in associative learning and memory. Acts as a regulator of GABAergic synaptic transmission at neuromuscular junctions by regulating GABA synaptic vesicle precursor transport: possibly functions as a cargo adapter for unc-104-mediated transport of synaptic vesicle precursors. Promotes localization of isoform c of daf-2 (daf-2c) to synaptic regions by acting as a signaling adapter between klc-2 and daf-2c. In terms of biological role, acts as aregulator of glutamate signaling in the sensory neurons by inhibiting the activity of command interneurons, thereby negatively regulating motor circuit activity and locomotion. This Caenorhabditis elegans protein is Calsyntenin-1.